The following is a 500-amino-acid chain: Neuronal acetylcholine receptor subunit beta-2 (500 aa).

Residues methionine 1–glycine 24 form the signal peptide. The Extracellular segment spans residues threonine 25–threonine 237. N-linked (GlcNAc...) asparagine glycans are attached at residues asparagine 50 and asparagine 167. A disulfide bond links cysteine 154 and cysteine 168. Residues isoleucine 238–proline 258 traverse the membrane as a helical segment. At serine 259–threonine 266 the chain is on the cytoplasmic side. A helical transmembrane segment spans residues leucine 267–proline 287. Topologically, residues proline 288–tyrosine 299 are extracellular. Residues leucine 300 to valine 320 form a helical membrane-spanning segment. Residues histidine 321 to arginine 458 are Cytoplasmic-facing. The chain crosses the membrane as a helical span at residues leucine 459–proline 479.

This sequence belongs to the ligand-gated ion channel (TC 1.A.9) family. Acetylcholine receptor (TC 1.A.9.1) subfamily. Beta-2/CHRNB2 sub-subfamily. As to quaternary structure, neuronal AChR is a heteropentamer composed of two different types of subunits: alpha and beta. CHRNB2/Beta-2 subunit can be combined to CHRNA2/alpha-2, CHRNA3/alpha-3 or CHRNA4/alpha-4, CHRNA5/alpha-5, CHRNA6/alpha-6 and CHRNB3/beta-3 to give rise to functional receptors. CHRNA2:CHRNB2 and CHRNA4:CHRNB2 nAChR complexes exist in two subtypes: LS (low agonist sensitivity) with a (CHRNA2/4)3:(CHRNB2)2 and HS (high agonist sensitivity) with a (CHRNA2/4)2:(CHRNB2)3 stoichiometry; the subtypes differ in their subunit binding interfaces which are involved in ligand binding. Cells produce predominantly an (CHRNA4)3:(CHRNB2)2 nAChR. The stoichiometric form (CHRNA4)2:(CHRNB2)3 expression is selectively up-regulated by nicotine and has lower single channel conductance and calcium permeability. Also part of the stoichiometric forms: (CHRNA4:CHRNB2)2:CHRNB3 or (CHRNA6:CHRNB2)2:CHRNB3. Can form heteropentamers with CHRNA7, mainly found in basal forebrain cholinergic neurons. Interacts with RIC3; which is required for proper folding and assembly. Interacts with LYPD6. As to expression, expressed in most regions of the CNS.

It is found in the synaptic cell membrane. It localises to the cell membrane. The catalysed reaction is Ca(2+)(in) = Ca(2+)(out). The enzyme catalyses K(+)(in) = K(+)(out). It carries out the reaction Na(+)(in) = Na(+)(out). Activated by a myriad of ligands such as acetylcholine, cytisine, nicotine, choline and epibatidine. Channel potentiation by calcium is stoichiometry-selective, CHRNA4:CHRNB2 nACh receptor is achieved by calcium association with topographically distinct sites framed by anionic residues within the CHRNA4 subunit and between the CHRNA4 and CHRNB2 subunits. Oligomeric amyloid-beta protein 42 activates specifially CHRNA7:CHRNB2 nAchRs. nAChR activity is inhibited by the antagonist alpha-conotoxins BuIA, PnIA, PnIC, GID and MII, small disulfide-constrained peptides from cone snails. Its function is as follows. Component of neuronal acetylcholine receptors (nAChRs) that function as pentameric, ligand-gated cation channels with high calcium permeability among other activities. nAChRs are excitatory neurotrasnmitter receptors formed by a collection of nAChR subunits known to mediate synaptic transmission in the nervous system and the neuromuscular junction. Each nAchR subunit confers differential attributes to channel properties, including activation, deactivation and desensitization kinetics, pH sensitivity, cation permeability, and binding to allosteric modulators. CHRNB2 forms heteropentameric neuronal acetylcholine receptors with CHRNA2, CHRNA3, CHRNA4 and CHRNA6, as well as CHRNA5 and CHRNB3 as accesory subunits. Found in two major stoichiometric forms,(CHRNA4)3:(CHRNB2)2 and (CHRNA4)2:(CHRNB2)3, the two stoichiometric forms differ in their unitary conductance, calcium permeability, ACh sensitivity and potentiation by divalent cation. Heteropentameric channels with CHRNA6 and CHRNA4 exhibit high sensitivity to ACh and nicotine and are predominantly expressed in only a few brain areas, including dopaminergic neurons, norepirephrine neurons and cells of the visual system. nAChrs containing CHRNA6 subunits mediate endogenous cholinergic modulation of dopamine and gamma-aminobutyric acid (GABA) release in response to nicotine at nerve terminals. Also forms functional nAChRs with other subunits such as CHRNA7:CHRNB2, mainly expressed in basal forebrain cholinergic neurons. The chain is Neuronal acetylcholine receptor subunit beta-2 (Chrnb2) from Rattus norvegicus (Rat).